The chain runs to 175 residues: RNA pyrophosphohydrolase (175 aa).

Residues 6 to 149 (GYRPNVGIVI…KRDVYRRVMK (144 aa)) enclose the Nudix hydrolase domain. The Nudix box motif lies at 38 to 59 (GGINPGETPEQAMYRELFEEVG).

This sequence belongs to the Nudix hydrolase family. RppH subfamily. It depends on a divalent metal cation as a cofactor.

Accelerates the degradation of transcripts by removing pyrophosphate from the 5'-end of triphosphorylated RNA, leading to a more labile monophosphorylated state that can stimulate subsequent ribonuclease cleavage. This chain is RNA pyrophosphohydrolase, found in Yersinia enterocolitica serotype O:8 / biotype 1B (strain NCTC 13174 / 8081).